The primary structure comprises 421 residues: Leucine-rich repeat-containing protein 42 (421 aa).

5 LRR repeats span residues 149–170 (VLCSLCLRNRYLVVAEKLEEIK), 174–195 (ELTRLDLSCCWLGDEHELLEHL), 202–222 (SVTQLHLKDNCLSDAGIRKMT), 234–255 (NLALLDLSCNPEITDAGIGYLF), and 259–280 (KLNCLDISGTGLKDIKAVKDKL). The segment at 376 to 406 (PLLSQESKKSKKRAFKESEQEQSSPQSAKQK) is disordered. The segment covering 396–406 (EQSSPQSAKQK) has biased composition (low complexity). Ser399 carries the phosphoserine modification.

This sequence belongs to the LRRC42 family.

The protein is Leucine-rich repeat-containing protein 42 (Lrrc42) of Mus musculus (Mouse).